A 547-amino-acid polypeptide reads, in one-letter code: Serine/threonine-protein kinase RIO2 (547 aa).

The Protein kinase domain occupies 97–273 (VGNQMGVGKE…RDVKCIREFF (177 aa)). Lys-123 is a binding site for ATP. Catalysis depends on Asp-228, which acts as the Proton acceptor. A phosphoserine mark is found at Ser-332, Ser-337, Ser-350, Ser-362, Ser-385, and Ser-390. Positions 352-385 (LEKEADPADESGGSWCCSSTDSKQIKDGGLPEES) are disordered. The Nuclear export signal motif lies at 399 to 408 (AVEEMERQVL). The tract at residues 404 to 445 (ERQVLPHRSVTEFSEESRRTENDGQPGQRSPAGSEDCDDEPP) is disordered. Phosphoserine occurs at positions 412, 417, 433, 437, and 543.

It belongs to the protein kinase superfamily. RIO-type Ser/Thr kinase family. Associated with late 40S pre-ribosomal particles. Interacts with PLK1 (via its N-terminus). Mg(2+) is required as a cofactor. Post-translationally, autophosphorylated (in vitro). Phosphorylation affects the timing of the metaphase-anaphase transition.

It is found in the cytoplasm. The catalysed reaction is L-seryl-[protein] + ATP = O-phospho-L-seryl-[protein] + ADP + H(+). It carries out the reaction L-threonyl-[protein] + ATP = O-phospho-L-threonyl-[protein] + ADP + H(+). Serine/threonine-protein kinase involved in the final steps of cytoplasmic maturation of the 40S ribosomal subunit. Involved in export of the 40S pre-ribosome particles (pre-40S) from the nucleus to the cytoplasm. Its kinase activity is required for the release of NOB1, PNO1 and LTV1 from the late pre-40S and the processing of 18S-E pre-rRNA to the mature 18S rRNA. May regulate the timing of the metaphase-anaphase transition during mitotic progression, and its phosphorylation, may regulate this function. This Mus musculus (Mouse) protein is Serine/threonine-protein kinase RIO2 (Riok2).